The sequence spans 368 residues: Isopentenyl-diphosphate delta-isomerase (368 aa).

Substrate is bound at residue 7–8 (RK). FMN is bound by residues threonine 65, 66 to 68 (GMT), serine 96, and asparagine 125. Substrate is bound at residue 96-98 (SQR). Glutamine 160 contributes to the substrate binding site. A Mg(2+)-binding site is contributed by glutamate 161. FMN is bound by residues lysine 193, serine 218, threonine 223, 275-277 (GIR), and 296-297 (AL).

This sequence belongs to the IPP isomerase type 2 family. Homooctamer. Dimer of tetramers. FMN serves as cofactor. It depends on NADPH as a cofactor. The cofactor is Mg(2+).

The protein localises to the cytoplasm. The enzyme catalyses isopentenyl diphosphate = dimethylallyl diphosphate. Involved in the biosynthesis of isoprenoids. Catalyzes the 1,3-allylic rearrangement of the homoallylic substrate isopentenyl (IPP) to its allylic isomer, dimethylallyl diphosphate (DMAPP). This is Isopentenyl-diphosphate delta-isomerase from Saccharolobus shibatae (strain ATCC 51178 / DSM 5389 / JCM 8931 / NBRC 15437 / B12) (Sulfolobus shibatae).